Consider the following 434-residue polypeptide: Vi polysaccharide export inner-membrane protein VexD (434 aa).

Positions 1 to 50 (MENSERIKKWKEERAKVAQESRASRLQQKEDERALRQTEKSADAKSHHNP) are enriched in basic and acidic residues. Positions 1–58 (MENSERIKKWKEERAKVAQESRASRLQQKEDERALRQTEKSADAKSHHNPDAGWSATD) are disordered. 2 helical membrane passes run 84–104 (LFLYIALPLLVIMLMSWILTS) and 409–429 (WLLFFVLLGITYLVTSLLITI).

Belongs to the BexC/CtrB/KpsE family.

Its subcellular location is the cell inner membrane. In terms of biological role, may form an ATP-driven capsule polysaccharide export apparatus, in association with the VexA, VexB and VexC proteins. This is Vi polysaccharide export inner-membrane protein VexD (vexD) from Salmonella typhi.